A 131-amino-acid polypeptide reads, in one-letter code: Protein FAM107B (131 aa).

Ala2 bears the N-acetylalanine mark. Disordered stretches follow at residues 39–78 and 100–131; these read MNQKRGLAPQNKPELQKVMEKRRRDQVIKQKEEEAQKKKS and KLQEEQENAPEFVKVKGNLRRTGQEVAQAQES. Lys50 carries the post-translational modification N6-acetyllysine. Positions 52–78 are enriched in basic and acidic residues; it reads ELQKVMEKRRRDQVIKQKEEEAQKKKS. A coiled-coil region spans residues 61 to 112; the sequence is RRDQVIKQKEEEAQKKKSDLEIELLKRQQKLEQLELEKQKLQEEQENAPEFV.

It belongs to the FAM107 family.

The protein is Protein FAM107B of Rattus norvegicus (Rat).